We begin with the raw amino-acid sequence, 708 residues long: Leucine-rich repeat neuronal protein 3 (708 aa).

The signal sequence occupies residues 1–22 (MKDMPLQIHVLLGLAITTLVQA). In terms of domain architecture, LRRNT spans 23–69 (VDKKVDCPQLCTCEIRPWFTPTSIYMEASTVDCNDLGLLTFPARLPA). Residues 23 to 628 (VDKKVDCPQL…KEYEKSNTTT (606 aa)) are Extracellular-facing. LRR repeat units follow at residues 70 to 91 (NTQILLLQTNDIAKIEYSTDFP), 93 to 114 (NLTGLDLSQNNLSSVTNINVKK), 117 to 138 (QLLSVYLEENKLTELPEKCLSE), 141 to 162 (NLQELYINHNLLSTISPGAFIG), 165 to 186 (NLLRLHLNSNRLQMINSKWFDA), 189 to 210 (NLEILMIGENPIIRIKDMNFKP), 213 to 234 (NLRSLVIAGINLTEIPDNALVG), 237 to 258 (NLESISFYDNRLIKVPHAALQK), 261 to 282 (NLKFLDLNKNPINRIRRGDFSN), 285 to 304 (HLKELGINNMPELISIDSLA), 310 to 332 (DLRKIEATNNPRLSYIHPNAFFR), and 335 to 358 (KLESLMLNSNALSALYHGTIESLP). 2 N-linked (GlcNAc...) asparagine glycosylation sites follow: Asn93 and Asn103. An N-linked (GlcNAc...) asparagine glycan is attached at Asn223. The LRRCT domain maps to 368-421 (NPIRCDCVIRWINMNKTNIRFMEPDSLFCVDPPEFQGQNVRQVHFRDMMEICLP). Asn382 carries N-linked (GlcNAc...) asparagine glycosylation. The 94-residue stretch at 421-514 (PLIAPESFPS…DLKSVMIKVD (94 aa)) folds into the Ig-like C2-type domain. Cys444 and Cys496 are oxidised to a cystine. Residues Asn522, Asn579, Asn608, and Asn625 are each glycosylated (N-linked (GlcNAc...) asparagine). In terms of domain architecture, Fibronectin type-III spans 523–617 (GSLNIKIRDI…NVTTKGLDPD (95 aa)). The helical transmembrane segment at 629–649 (LMACLGGLLGIIGVICLISCL) threads the bilayer. The Cytoplasmic segment spans residues 650 to 708 (SPEMNCDGGHSYVRNYLQKPTFALGELYPPLINLWEAGKEKSTSLKVKATVIGLPTNMS).

It localises to the membrane. The sequence is that of Leucine-rich repeat neuronal protein 3 (LRRN3) from Pongo abelii (Sumatran orangutan).